A 421-amino-acid polypeptide reads, in one-letter code: Dihydroorotase (421 aa).

Residues His-59 and His-61 each contribute to the Zn(2+) site. Substrate is bound by residues His-61 to Arg-63 and Asn-93. Residues Asp-150, His-177, and His-230 each contribute to the Zn(2+) site. Residue Asn-276 coordinates substrate. Asp-303 contacts Zn(2+). Asp-303 is an active-site residue. His-307 contributes to the substrate binding site.

The protein belongs to the metallo-dependent hydrolases superfamily. DHOase family. Class I DHOase subfamily. Zn(2+) serves as cofactor.

The enzyme catalyses (S)-dihydroorotate + H2O = N-carbamoyl-L-aspartate + H(+). It participates in pyrimidine metabolism; UMP biosynthesis via de novo pathway; (S)-dihydroorotate from bicarbonate: step 3/3. Functionally, catalyzes the reversible cyclization of carbamoyl aspartate to dihydroorotate. This is Dihydroorotase from Desulfotalea psychrophila (strain LSv54 / DSM 12343).